Reading from the N-terminus, the 675-residue chain is Methionine--tRNA ligase (675 aa).

The 'HIGH' region motif lies at 15–25 (PYANGPIHLGH). Residues cysteine 146, cysteine 149, cysteine 159, and cysteine 162 each coordinate Zn(2+). The short motif at 332–336 (KMSKS) is the 'KMSKS' region element. Lysine 335 lines the ATP pocket. Residues 573-675 (DFAKVDMRVA…SGAQPGMQVK (103 aa)) form the tRNA-binding domain.

Belongs to the class-I aminoacyl-tRNA synthetase family. MetG type 1 subfamily. Homodimer. It depends on Zn(2+) as a cofactor.

Its subcellular location is the cytoplasm. The catalysed reaction is tRNA(Met) + L-methionine + ATP = L-methionyl-tRNA(Met) + AMP + diphosphate. Is required not only for elongation of protein synthesis but also for the initiation of all mRNA translation through initiator tRNA(fMet) aminoacylation. In Photorhabdus laumondii subsp. laumondii (strain DSM 15139 / CIP 105565 / TT01) (Photorhabdus luminescens subsp. laumondii), this protein is Methionine--tRNA ligase.